We begin with the raw amino-acid sequence, 407 residues long: MMEKHYVGSEIGQLRSVMLHRPNLSLKRLTPSNCQELLFDDVLSVERAGEEHDIFANTLRQQGIEVLLLTDLLTQTLDIPEAKSWLLETQISDYRLGPTFATDVRTWLAEMSHRDLARHLSGGLTYSEIPASIKNMVVDTHDINDFIMKPLPNHLFTRDTSCWIYNGVSINPMAKPARQRETNNLRAIYRWHPQFAGGEFIKYFGDENINYDHATLEGGDVLVIGRGAVLIGMSERTTPQGIEFLAQALFKHRQAERVIAVELPKHRSCMHLDTVMTHIDIDTFSVYPEVVRPDVNCWTLTPDGHGGLKRTQESTLLHAIEKALGIDQVRLITTGGDAFEAEREQWNDANNVLTLRPGVVVGYERNIWTNEKYDKAGITVLPIPGDELGRGRGGARCMSCPLHRDGI.

The active-site Amidino-cysteine intermediate is the Cys-397.

The protein belongs to the arginine deiminase family.

The protein resides in the cytoplasm. The enzyme catalyses L-arginine + H2O = L-citrulline + NH4(+). It functions in the pathway amino-acid degradation; L-arginine degradation via ADI pathway; carbamoyl phosphate from L-arginine: step 1/2. This Escherichia coli O6:H1 (strain CFT073 / ATCC 700928 / UPEC) protein is Arginine deiminase (arcA).